A 93-amino-acid chain; its full sequence is MALYEMNLSVILFLIGILGFVLNRKNIILMLISIEVMLLAVTLLVLVSSYSFDDILGQTYSIYIIAIAGAESAIGLGILVAYYRLRGNISLRQ.

3 consecutive transmembrane segments (helical) span residues 2 to 22 (ALYE…GFVL), 27 to 47 (IILM…LVLV), and 62 to 82 (IYII…LVAY).

This sequence belongs to the complex I subunit 4L family.

It is found in the mitochondrion inner membrane. It carries out the reaction a ubiquinone + NADH + 5 H(+)(in) = a ubiquinol + NAD(+) + 4 H(+)(out). Its function is as follows. Core subunit of the mitochondrial membrane respiratory chain NADH dehydrogenase (Complex I) that is believed to belong to the minimal assembly required for catalysis. Complex I functions in the transfer of electrons from NADH to the respiratory chain. The immediate electron acceptor for the enzyme is believed to be ubiquinone. This is NADH-ubiquinone oxidoreductase chain 4L (ND4L) from Mycosarcoma maydis (Corn smut fungus).